Here is a 935-residue protein sequence, read N- to C-terminus: Coiled-coil domain-containing protein 191 (935 aa).

Coiled-coil stretches lie at residues 189-324 (RLTM…ENQQ), 366-438 (YTRS…ALLK), 554-589 (RHVF…AEAQ), and 660-740 (KAME…LEAI). Disordered regions lie at residues 596 to 661 (SAVT…ILKA) and 678 to 715 (EKKK…RKRE).

The chain is Coiled-coil domain-containing protein 191 (CCDC191) from Macaca fascicularis (Crab-eating macaque).